Consider the following 450-residue polypeptide: Phosphoglucosamine mutase (450 aa).

The active-site Phosphoserine intermediate is the S101. Residues S101, D241, D243, and D245 each contribute to the Mg(2+) site. S101 bears the Phosphoserine mark.

It belongs to the phosphohexose mutase family. Requires Mg(2+) as cofactor. Post-translationally, activated by phosphorylation.

The catalysed reaction is alpha-D-glucosamine 1-phosphate = D-glucosamine 6-phosphate. In terms of biological role, catalyzes the conversion of glucosamine-6-phosphate to glucosamine-1-phosphate. This chain is Phosphoglucosamine mutase, found in Listeria welshimeri serovar 6b (strain ATCC 35897 / DSM 20650 / CCUG 15529 / CIP 8149 / NCTC 11857 / SLCC 5334 / V8).